A 652-amino-acid polypeptide reads, in one-letter code: Acetyl-coenzyme A synthetase (652 aa).

CoA contacts are provided by residues 191 to 194 (RAGR), Thr311, and Asn335. Residues 387-389 (GEP), 411-416 (DTWWQT), Asp500, and Arg515 contribute to the ATP site. Ser523 is a binding site for CoA. Position 526 (Arg526) interacts with ATP. Mg(2+) is bound by residues Val537, His539, and Ile542. Residue Arg584 participates in CoA binding. Lys609 bears the N6-acetyllysine mark.

This sequence belongs to the ATP-dependent AMP-binding enzyme family. The cofactor is Mg(2+). Post-translationally, acetylated. Deacetylation by the SIR2-homolog deacetylase activates the enzyme.

The enzyme catalyses acetate + ATP + CoA = acetyl-CoA + AMP + diphosphate. Its function is as follows. Catalyzes the conversion of acetate into acetyl-CoA (AcCoA), an essential intermediate at the junction of anabolic and catabolic pathways. Acs undergoes a two-step reaction. In the first half reaction, Acs combines acetate with ATP to form acetyl-adenylate (AcAMP) intermediate. In the second half reaction, it can then transfer the acetyl group from AcAMP to the sulfhydryl group of CoA, forming the product AcCoA. In terms of biological role, enables the cell to use acetate during aerobic growth to generate energy via the TCA cycle, and biosynthetic compounds via the glyoxylate shunt. Acetylates CheY, the response regulator involved in flagellar movement and chemotaxis. This is Acetyl-coenzyme A synthetase from Cronobacter sakazakii (strain ATCC BAA-894) (Enterobacter sakazakii).